The following is a 151-amino-acid chain: Large ribosomal subunit protein bL9 (151 aa).

This sequence belongs to the bacterial ribosomal protein bL9 family.

Functionally, binds to the 23S rRNA. The chain is Large ribosomal subunit protein bL9 from Mycobacteroides abscessus (strain ATCC 19977 / DSM 44196 / CCUG 20993 / CIP 104536 / JCM 13569 / NCTC 13031 / TMC 1543 / L948) (Mycobacterium abscessus).